The primary structure comprises 871 residues: Protein TIC 100 (871 aa).

The disordered stretch occupies residues 1-85 (MANEELTESQ…NANPETNIRR (85 aa)). Over residues 8–20 (ESQQQEDPSQQLP) the composition is skewed to polar residues. Low complexity predominate over residues 30–46 (SDSNSDSDASSQSSGDD). MORN repeat units follow at residues 219 to 239 (YEGT…AENG), 243 to 257 (YEGE…GHGV), and 337 to 352 (YAGQ…CGVY). The residue at position 238 (Asn-238) is a Deamidated asparagine. A coiled-coil region spans residues 587–647 (MLDGLEKWTE…QEEEKKTEMG (61 aa)). Disordered regions lie at residues 631-654 (EELK…EDED) and 669-721 (KEKI…NSPF). Over residues 632-645 (ELKKKEQEEEKKTE) the composition is skewed to basic and acidic residues. Residue Thr-649 is modified to Phosphothreonine. The span at 669–683 (KEKIQENKQEEKYKD) shows a compositional bias: basic and acidic residues. A compositionally biased stretch (acidic residues) spans 684–704 (DDDEDDDDGDDDDDDDDDDDL).

As to quaternary structure, part of the Tic complex. Component of the 1-MD complex, composed of TIC20-I, TIC214, TIC100 and TIC56. Interacts with the translocating preproteins. Hydrolysis of ATP is essential for the formation of this complex. The 1-MD complex interacts with TIC21. In terms of tissue distribution, preferentially expressed in ovules, and moderately expressed in leaves and siliques.

Its subcellular location is the plastid. It is found in the chloroplast inner membrane. Functionally, involved in protein precursor import into chloroplasts. May be part of an intermediate translocation complex acting as a protein-conducting channel at the inner envelope. Plays an important role during embryogenesis and chloroplast biogenesis. This Arabidopsis thaliana (Mouse-ear cress) protein is Protein TIC 100.